Consider the following 143-residue polypeptide: Peptide methionine sulfoxide reductase MsrB (143 aa).

The MsrB domain maps to 5–126; sequence KEEKIKSLNR…NSAALRFVPK (122 aa). The active-site Nucleophile is Cys-115.

Belongs to the MsrB Met sulfoxide reductase family.

The catalysed reaction is L-methionyl-[protein] + [thioredoxin]-disulfide + H2O = L-methionyl-(R)-S-oxide-[protein] + [thioredoxin]-dithiol. The protein is Peptide methionine sulfoxide reductase MsrB of Bacillus subtilis (strain 168).